Consider the following 847-residue polypeptide: Follistatin-related protein 5 (847 aa).

The first 20 residues, Met-1–Gly-20, serve as a signal peptide directing secretion. The Kazal-like domain occupies Gly-83–Phe-135. Disulfide bonds link Cys-89–Cys-119, Cys-93–Cys-112, and Cys-101–Cys-133. EF-hand domains follow at residues Arg-175–Gly-210 and Lys-211–Gln-246. 9 residues coordinate Ca(2+): Asp-188, Asp-190, Asn-192, Glu-199, Asp-226, Asn-228, Asp-230, His-232, and Glu-237. 2 consecutive Ig-like domains span residues Pro-250–Val-337 and Pro-341–Ser-426. 2 disulfide bridges follow: Cys-270–Cys-321 and Cys-362–Cys-413. N-linked (GlcNAc...) asparagine glycosylation is found at Asn-318 and Asn-394.

The protein resides in the secreted. This Homo sapiens (Human) protein is Follistatin-related protein 5 (FSTL5).